We begin with the raw amino-acid sequence, 301 residues long: dTDP-4-dehydrorhamnose reductase (301 aa).

NADH-binding positions include 10–12, D30, 39–40, and 63–65; these read GQV, DF, and AHT. 11–12 contacts NADPH; the sequence is QV. NADPH-binding positions include 39–40, 63–65, and Y102; these read DF and AHT. 104–105 contributes to the dTDP-beta-L-rhamnose binding site; that stretch reads TD. NADH is bound by residues Y129 and K133. Residues Y129 and K133 each contribute to the NADPH site. Y129 serves as the catalytic Proton donor/acceptor. A dTDP-beta-L-rhamnose-binding site is contributed by W155.

This sequence belongs to the dTDP-4-dehydrorhamnose reductase family. Homodimer. Mg(2+) serves as cofactor.

The enzyme catalyses dTDP-beta-L-rhamnose + NADP(+) = dTDP-4-dehydro-beta-L-rhamnose + NADPH + H(+). Its pathway is carbohydrate biosynthesis; dTDP-L-rhamnose biosynthesis. It functions in the pathway bacterial outer membrane biogenesis; LPS O-antigen biosynthesis. Its function is as follows. Involved in the biosynthesis of the dTDP-L-rhamnose which is an important component of lipopolysaccharide (LPS). Catalyzes the reduction of dTDP-6-deoxy-L-lyxo-4-hexulose to yield dTDP-L-rhamnose. RmlD uses NADH and NADPH nearly equally well. The polypeptide is dTDP-4-dehydrorhamnose reductase (Escherichia coli).